The following is a 158-amino-acid chain: Trafficking protein particle complex subunit 6B (158 aa).

It belongs to the TRAPP small subunits family. BET3 subfamily. Homodimer. Part of a TRAPP complex. Heterodimer with TRAPPC3. The heterodimer TRAPPC6B-TRAPPC3 interacts with TRAPPC1 likely providing a core for TRAPP complex formation.

The protein localises to the golgi apparatus. It is found in the cis-Golgi network. The protein resides in the endoplasmic reticulum. In terms of biological role, component of a transport protein particle (TRAPP) complex that may function in specific stages of inter-organelle traffic. Specifically involved in the early development of neural circuitry, likely by controlling the frequency and amplitude of intracellular calcium transients implicated in the regulation of neuron differentiation and survival. The polypeptide is Trafficking protein particle complex subunit 6B (Bos taurus (Bovine)).